Here is a 481-residue protein sequence, read N- to C-terminus: UDP-glycosyltransferase 72E2 (481 aa).

Histidine 18 serves as the catalytic Proton acceptor. Histidine 18 contributes to the an anthocyanidin binding site. Aspartate 111 acts as the Charge relay in catalysis. The UDP-alpha-D-glucose site is built by alanine 346, glutamine 348, histidine 363, tryptophan 366, serine 368, and glutamate 371. Alanine 386 provides a ligand contact to an anthocyanidin. Residues glutamate 387 and glutamine 388 each contribute to the UDP-alpha-D-glucose site.

This sequence belongs to the UDP-glycosyltransferase family. Expressed in seedlings and roots.

It catalyses the reaction (E)-4-coumarate + UDP-alpha-D-glucose = 4-O-(beta-D-glucosyl)-trans-4-coumarate + UDP + H(+). It carries out the reaction (E)-coniferol + UDP-alpha-D-glucose = 4-O-(beta-D-glucosyl)-(E)-coniferol + UDP + H(+). The enzyme catalyses (E)-sinapyl alcohol + UDP-alpha-D-glucose = 4-O-(beta-D-glucosyl)-trans-4-sinapoyl alcohol + UDP + H(+). The catalysed reaction is (E)-sinapate + UDP-alpha-D-glucose = 4-O-(beta-D-glucosyl)-trans-sinapate + UDP + H(+). It catalyses the reaction (E)-coniferaldehyde + UDP-alpha-D-glucose = 4-O-(beta-D-glucosyl)-4-(E)-coniferyl aldehyde + UDP + H(+). It carries out the reaction (E)-sinapaldehyde + UDP-alpha-D-glucose = 4-O-(beta-D-glucosyl)-4-trans-sinapoyl aldehyde + UDP + H(+). In terms of biological role, involved in the O-glucosylation of monolignols (alcohol monomers of lignin). Glucosylates coniferyl alcohol to form coniferyl alcohol 4-O-glucoside. Glucosylates sinapyl alcohol to form sinapyl alcohol 4-O-glucoside. Glucosylates coniferyl aldehyde to form coniferyl aldehyde 4-O-glucoside. Glucosylates sinapyl aldehyde to form sinapyl aldehyde 4-O-glucoside. Possesses low activity with sinapate and ferulate as substrates. The sequence is that of UDP-glycosyltransferase 72E2 from Arabidopsis thaliana (Mouse-ear cress).